A 721-amino-acid polypeptide reads, in one-letter code: 1,4-alpha-glucan branching enzyme GlgB (721 aa).

Aspartate 400 acts as the Nucleophile in catalysis. The active-site Proton donor is the glutamate 453.

It belongs to the glycosyl hydrolase 13 family. GlgB subfamily. In terms of assembly, monomer.

The enzyme catalyses Transfers a segment of a (1-&gt;4)-alpha-D-glucan chain to a primary hydroxy group in a similar glucan chain.. It functions in the pathway glycan biosynthesis; glycogen biosynthesis. Its function is as follows. Catalyzes the formation of the alpha-1,6-glucosidic linkages in glycogen by scission of a 1,4-alpha-linked oligosaccharide from growing alpha-1,4-glucan chains and the subsequent attachment of the oligosaccharide to the alpha-1,6 position. In Chlamydia felis (strain Fe/C-56) (Chlamydophila felis), this protein is 1,4-alpha-glucan branching enzyme GlgB.